A 258-amino-acid chain; its full sequence is UPF0246 protein CGSHiEE_07045 (258 aa).

It belongs to the UPF0246 family.

The polypeptide is UPF0246 protein CGSHiEE_07045 (Haemophilus influenzae (strain PittEE)).